The chain runs to 399 residues: CCA-adding enzyme (399 aa).

Positions 32 and 35 each coordinate ATP. CTP contacts are provided by glycine 32 and arginine 35. Mg(2+) contacts are provided by aspartate 45 and aspartate 47. Residues arginine 116, aspartate 159, arginine 162, arginine 165, and arginine 168 each contribute to the ATP site. Positions 116, 159, 162, 165, and 168 each coordinate CTP.

It belongs to the tRNA nucleotidyltransferase/poly(A) polymerase family. Bacterial CCA-adding enzyme type 3 subfamily. Homodimer. It depends on Mg(2+) as a cofactor.

It carries out the reaction a tRNA precursor + 2 CTP + ATP = a tRNA with a 3' CCA end + 3 diphosphate. It catalyses the reaction a tRNA with a 3' CCA end + 2 CTP + ATP = a tRNA with a 3' CCACCA end + 3 diphosphate. Catalyzes the addition and repair of the essential 3'-terminal CCA sequence in tRNAs without using a nucleic acid template. Adds these three nucleotides in the order of C, C, and A to the tRNA nucleotide-73, using CTP and ATP as substrates and producing inorganic pyrophosphate. tRNA 3'-terminal CCA addition is required both for tRNA processing and repair. Also involved in tRNA surveillance by mediating tandem CCA addition to generate a CCACCA at the 3' terminus of unstable tRNAs. While stable tRNAs receive only 3'-terminal CCA, unstable tRNAs are marked with CCACCA and rapidly degraded. This Streptococcus pneumoniae (strain CGSP14) protein is CCA-adding enzyme.